Consider the following 210-residue polypeptide: Outer-membrane lipoprotein LolB (210 aa).

The first 26 residues, 1 to 26, serve as a signal peptide directing secretion; that stretch reads MSKLKIDTKRRFSLLIALVLIISLSS. C27 carries N-palmitoyl cysteine lipidation. Residue C27 is the site of S-diacylglycerol cysteine attachment.

This sequence belongs to the LolB family. In terms of assembly, monomer.

The protein localises to the cell outer membrane. Plays a critical role in the incorporation of lipoproteins in the outer membrane after they are released by the LolA protein. This chain is Outer-membrane lipoprotein LolB, found in Francisella tularensis subsp. novicida (strain U112).